A 558-amino-acid chain; its full sequence is Dihydroxy-acid dehydratase (558 aa).

Residue Asp-81 coordinates Mg(2+). [2Fe-2S] cluster is bound at residue Cys-122. Asp-123 and Lys-124 together coordinate Mg(2+). Residue Lys-124 is modified to N6-carboxylysine. A [2Fe-2S] cluster-binding site is contributed by Cys-195. Glu-447 contributes to the Mg(2+) binding site. Catalysis depends on Ser-473, which acts as the Proton acceptor.

Belongs to the IlvD/Edd family. As to quaternary structure, homodimer. Requires [2Fe-2S] cluster as cofactor. Mg(2+) serves as cofactor.

The enzyme catalyses (2R)-2,3-dihydroxy-3-methylbutanoate = 3-methyl-2-oxobutanoate + H2O. It carries out the reaction (2R,3R)-2,3-dihydroxy-3-methylpentanoate = (S)-3-methyl-2-oxopentanoate + H2O. The protein operates within amino-acid biosynthesis; L-isoleucine biosynthesis; L-isoleucine from 2-oxobutanoate: step 3/4. It participates in amino-acid biosynthesis; L-valine biosynthesis; L-valine from pyruvate: step 3/4. Functionally, functions in the biosynthesis of branched-chain amino acids. Catalyzes the dehydration of (2R,3R)-2,3-dihydroxy-3-methylpentanoate (2,3-dihydroxy-3-methylvalerate) into 2-oxo-3-methylpentanoate (2-oxo-3-methylvalerate) and of (2R)-2,3-dihydroxy-3-methylbutanoate (2,3-dihydroxyisovalerate) into 2-oxo-3-methylbutanoate (2-oxoisovalerate), the penultimate precursor to L-isoleucine and L-valine, respectively. The chain is Dihydroxy-acid dehydratase from Bacillus velezensis (strain DSM 23117 / BGSC 10A6 / LMG 26770 / FZB42) (Bacillus amyloliquefaciens subsp. plantarum).